Here is a 1925-residue protein sequence, read N- to C-terminus: Cilia- and flagella-associated protein 65 (1925 aa).

A helical transmembrane segment spans residues 188-208; it reads FFTVIPQPIFLSPGITLTLPI. Residues 877 to 986 enclose the MSP domain; sequence QLKLDTHKSL…THYMLRLVGV (110 aa). Residues 1525-1550 adopt a coiled-coil conformation; it reads SQQLMRQYHKELQEWKDEKVRQEVEF. Disordered stretches follow at residues 1645 to 1667 and 1736 to 1823; these read KRKA…WGPV and SSWE…PESQ. Composition is skewed to basic and acidic residues over residues 1649–1661 and 1739–1762; these read PREE…EKSP and EDGK…KKEE. Residues 1763 to 1804 show a composition bias toward acidic residues; the sequence is GEEEKGEEEEEELEEEEEEEEETEEEELGKEEIEEKEEERDE.

This sequence belongs to the CFAP65 family. In terms of assembly, interacts with CFAP47.

It is found in the cell projection. The protein localises to the cilium. The protein resides in the flagellum membrane. Its subcellular location is the cytoplasmic vesicle. It localises to the secretory vesicle. It is found in the acrosome membrane. The protein localises to the cytoplasm. In terms of biological role, plays a role in flagellar formation and sperm motility. This is Cilia- and flagella-associated protein 65 from Homo sapiens (Human).